The chain runs to 232 residues: Uracil-DNA glycosylase (232 aa).

Asp66 acts as the Proton acceptor in catalysis.

This sequence belongs to the uracil-DNA glycosylase (UDG) superfamily. UNG family.

The protein localises to the cytoplasm. It catalyses the reaction Hydrolyzes single-stranded DNA or mismatched double-stranded DNA and polynucleotides, releasing free uracil.. In terms of biological role, excises uracil residues from the DNA which can arise as a result of misincorporation of dUMP residues by DNA polymerase or due to deamination of cytosine. The polypeptide is Uracil-DNA glycosylase (Lactobacillus acidophilus (strain ATCC 700396 / NCK56 / N2 / NCFM)).